The sequence spans 490 residues: Probable glycine dehydrogenase (decarboxylating) subunit 2 (490 aa).

Lys-273 is subject to N6-(pyridoxal phosphate)lysine.

This sequence belongs to the GcvP family. C-terminal subunit subfamily. As to quaternary structure, the glycine cleavage system is composed of four proteins: P, T, L and H. In this organism, the P 'protein' is a heterodimer of two subunits. Pyridoxal 5'-phosphate serves as cofactor.

It catalyses the reaction N(6)-[(R)-lipoyl]-L-lysyl-[glycine-cleavage complex H protein] + glycine + H(+) = N(6)-[(R)-S(8)-aminomethyldihydrolipoyl]-L-lysyl-[glycine-cleavage complex H protein] + CO2. Its function is as follows. The glycine cleavage system catalyzes the degradation of glycine. The P protein binds the alpha-amino group of glycine through its pyridoxal phosphate cofactor; CO(2) is released and the remaining methylamine moiety is then transferred to the lipoamide cofactor of the H protein. This is Probable glycine dehydrogenase (decarboxylating) subunit 2 from Staphylococcus aureus (strain bovine RF122 / ET3-1).